Reading from the N-terminus, the 772-residue chain is NAD(P)H-quinone oxidoreductase subunit 5, chloroplastic (772 aa).

15 consecutive transmembrane segments (helical) span residues 8-28, 39-59, 87-107, 120-140, 147-167, 185-205, 219-239, 258-278, 291-311, 395-415, 425-445, 574-594, 631-651, 710-730, and 738-758; these read IWIVPVCPFVASMSVGLGLFF, ICAIISIFLLGIAMFISFSIF, FLIDPLTSTMLVSVTSVGILV, GYVRFFAYLSLFTASMLGLVL, IYIFWELVGMCSYLLIGFWFS, GDFGLLLGILGTYWITGSFDI, NGVNLFLANMCALLLFLGPAA, TPISALIHAATMVAAGIFFVA, MNIISWVGGITALLGATIALA, GTTFLLGTLSLCGIPPFACFW, WIASASLGWIAWCTAGLTGFY, LFSLISLAIPTLFIGFIGVPF, IPSVSIALVGVSISFFIYGPV, WIIDGIVNGIGILSFFGGEGM, and IPSYLFGLIIGNILMLIILII.

This sequence belongs to the complex I subunit 5 family. As to quaternary structure, NDH is composed of at least 16 different subunits, 5 of which are encoded in the nucleus.

It localises to the plastid. It is found in the chloroplast thylakoid membrane. It catalyses the reaction a plastoquinone + NADH + (n+1) H(+)(in) = a plastoquinol + NAD(+) + n H(+)(out). The enzyme catalyses a plastoquinone + NADPH + (n+1) H(+)(in) = a plastoquinol + NADP(+) + n H(+)(out). Functionally, NDH shuttles electrons from NAD(P)H:plastoquinone, via FMN and iron-sulfur (Fe-S) centers, to quinones in the photosynthetic chain and possibly in a chloroplast respiratory chain. The immediate electron acceptor for the enzyme in this species is believed to be plastoquinone. Couples the redox reaction to proton translocation, and thus conserves the redox energy in a proton gradient. The polypeptide is NAD(P)H-quinone oxidoreductase subunit 5, chloroplastic (ndhF) (Angiopteris evecta (Mule's foot fern)).